Reading from the N-terminus, the 302-residue chain is Acetylxylan esterase (302 aa).

An N-terminal signal peptide occupies residues 1 to 20 (MPSVKETLTLLLSQAFLATG). A propeptide spanning residues 21–31 (SPVDGETVVKR) is cleaved from the precursor. Pyrrolidone carboxylic acid is present on Gln-32. Asn-94 carries N-linked (GlcNAc...) asparagine glycosylation. The active site involves Ser-121. A disordered region spans residues 236-273 (QLSSGGSQPPGGGPTSTSRPTSTRTGSSPGPTQTHWGQ). A linker region spans residues 244-266 (PPGGGPTSTSRPTSTRTGSSPGP). Residues 250 to 269 (TSTSRPTSTRTGSSPGPTQT) show a composition bias toward low complexity. In terms of domain architecture, CBM1 spans 266–302 (PTQTHWGQCGGQGWTGPTQCESGTTCQVISQWYSQCL). Disulfide bonds link Cys-274–Cys-291 and Cys-285–Cys-301.

It belongs to the cutinase family. Acetylxylan esterase subfamily. As to quaternary structure, monomer. In terms of processing, glycosylated.

Its subcellular location is the secreted. The enzyme catalyses Deacetylation of xylans and xylo-oligosaccharides.. Its pathway is glycan degradation; xylan degradation. Inhibited by phenylmethylsulfonyl flouride. In terms of biological role, degrades acetylated xylans by cleaving acetyl side groups from the hetero-xylan backbone. The sequence is that of Acetylxylan esterase (axe1) from Hypocrea jecorina (Trichoderma reesei).